The chain runs to 480 residues: Islet cell autoantigen 1 (480 aa).

The 204-residue stretch at 50–253 folds into the AH domain; it reads ASDADLDAKL…TSHTMAAIHE (204 aa). Composition is skewed to basic and acidic residues over residues 276–293 and 306–321; these read LVEK…REAV and ENQH…EEGK. Disordered stretches follow at residues 276–338 and 400–421; these read LVEK…ACSG and LKEP…IGSA.

It localises to the cytoplasm. Its subcellular location is the cytosol. The protein resides in the golgi apparatus membrane. The protein localises to the cytoplasmic vesicle. It is found in the secretory vesicle membrane. It localises to the secretory vesicle. Its subcellular location is the synaptic vesicle membrane. Functionally, may play a role in neurotransmitter secretion. This Rattus norvegicus (Rat) protein is Islet cell autoantigen 1.